The sequence spans 856 residues: Serine/threonine-protein phosphatase 6 regulatory subunit 1 (856 aa).

Residues 10–403 form an interaction with PPP6C region; the sequence is SSHLDTLLEK…VFNNFLHAQV (394 aa). At Ser-232 the chain carries Phosphoserine. Thr-524 bears the Phosphothreonine mark. A phosphoserine mark is found at Ser-529, Ser-530, and Ser-531. Over residues 621-630 the composition is skewed to acidic residues; it reads DDEEEEEEEG. Disordered stretches follow at residues 621–770 and 792–856; these read DDEE…KVAE and RSAP…SGSQ. Residues Ser-633 and Ser-636 each carry the phosphoserine modification. Over residues 644–656 the composition is skewed to polar residues; that stretch reads QGSQPVRASQASQ. A compositionally biased stretch (acidic residues) spans 667–683; sequence DSEEEDEEEDEEEDEGA. A phosphoserine mark is found at Ser-698 and Ser-739. A compositionally biased stretch (polar residues) spans 794 to 809; it reads APSSLDSATRDPSTSV. Position 826 is a phosphoserine (Ser-826). Residues 842-856 are compositionally biased toward low complexity; sequence PNGSTPGGPISSGSQ.

This sequence belongs to the SAPS family. In terms of assembly, protein phosphatase 6 (PP6) holoenzyme is proposed to be a heterotrimeric complex formed of the catalytic subunit, a SAPS domain-containing subunit (PP6R) and an ankyrin repeat-domain containing regulatory subunit (ARS). Interacts with PPP6C and NFKBIE. Interacts with ANKRD28, ANKRD44 and ANKRD52. In terms of tissue distribution, ubiquitous with highest expression in lung, spleen and bladder.

Its subcellular location is the cytoplasm. In terms of biological role, regulatory subunit of protein phosphatase 6 (PP6). May function as a scaffolding PP6 subunit. Involved in the PP6-mediated dephosphorylation of NFKBIE opposing its degradation in response to TNF-alpha. The polypeptide is Serine/threonine-protein phosphatase 6 regulatory subunit 1 (Ppp6r1) (Mus musculus (Mouse)).